Reading from the N-terminus, the 124-residue chain is Quinol oxidase subunit 4 (124 aa).

A run of 3 helical transmembrane segments spans residues 16 to 36, 44 to 64, and 78 to 98; these read IVGF…AVYT, LWII…MFMH, and TLFG…IFAA.

The protein belongs to the cytochrome c oxidase bacterial subunit 4 family.

The protein resides in the cell membrane. It carries out the reaction 2 a quinol + O2 = 2 a quinone + 2 H2O. In terms of biological role, catalyzes quinol oxidation with the concomitant reduction of oxygen to water. Major component for energy conversion during vegetative growth. This chain is Quinol oxidase subunit 4 (qoxD), found in Bacillus spizizenii (strain ATCC 23059 / NRRL B-14472 / W23) (Bacillus subtilis subsp. spizizenii).